We begin with the raw amino-acid sequence, 734 residues long: Photosystem I P700 chlorophyll a apoprotein A2 (734 aa).

8 helical membrane passes run 46-69 (IFAS…FHVA), 135-158 (LYSG…LHLQ), 175-199 (LNHH…HVAI), 273-291 (MAHH…GHMY), 330-353 (IHFQ…QHMY), 369-395 (AALY…IFFI), 417-439 (AIIS…LYVH), and 517-535 (FLVH…LILV). Positions 559 and 568 each coordinate [4Fe-4S] cluster. 2 helical membrane-spanning segments follow: residues 575–596 (AFYL…YWHW) and 643–665 (LSVW…MFLI). Positions 654, 662, and 670 each coordinate chlorophyll a. Trp671 is a phylloquinone binding site. A helical membrane pass occupies residues 707-727 (LVGLAHFSVGYIFTYAAFLIA).

It belongs to the PsaA/PsaB family. In terms of assembly, the PsaA/B heterodimer binds the P700 chlorophyll special pair and subsequent electron acceptors. PSI consists of a core antenna complex that captures photons, and an electron transfer chain that converts photonic excitation into a charge separation. The eukaryotic PSI reaction center is composed of at least 11 subunits. The cofactor is P700 is a chlorophyll a/chlorophyll a' dimer, A0 is one or more chlorophyll a, A1 is one or both phylloquinones and FX is a shared 4Fe-4S iron-sulfur center..

It is found in the plastid. The protein resides in the chloroplast thylakoid membrane. The catalysed reaction is reduced [plastocyanin] + hnu + oxidized [2Fe-2S]-[ferredoxin] = oxidized [plastocyanin] + reduced [2Fe-2S]-[ferredoxin]. Its function is as follows. PsaA and PsaB bind P700, the primary electron donor of photosystem I (PSI), as well as the electron acceptors A0, A1 and FX. PSI is a plastocyanin-ferredoxin oxidoreductase, converting photonic excitation into a charge separation, which transfers an electron from the donor P700 chlorophyll pair to the spectroscopically characterized acceptors A0, A1, FX, FA and FB in turn. Oxidized P700 is reduced on the lumenal side of the thylakoid membrane by plastocyanin. This is Photosystem I P700 chlorophyll a apoprotein A2 from Lotus japonicus (Lotus corniculatus var. japonicus).